A 235-amino-acid chain; its full sequence is Glycerol-3-phosphate acyltransferase (235 aa).

A run of 6 helical transmembrane segments spans residues 4-24, 56-76, 94-114, 125-145, 152-172, and 191-211; these read LLAI…IMAG, SVTL…VAFF, LLAG…GFKG, LIGI…LTVW, VASI…KYVF, and FHDS…LAIL.

This sequence belongs to the PlsY family. Probably interacts with PlsX.

Its subcellular location is the cell inner membrane. It catalyses the reaction an acyl phosphate + sn-glycerol 3-phosphate = a 1-acyl-sn-glycero-3-phosphate + phosphate. The protein operates within lipid metabolism; phospholipid metabolism. Its function is as follows. Catalyzes the transfer of an acyl group from acyl-phosphate (acyl-PO(4)) to glycerol-3-phosphate (G3P) to form lysophosphatidic acid (LPA). This enzyme utilizes acyl-phosphate as fatty acyl donor, but not acyl-CoA or acyl-ACP. The polypeptide is Glycerol-3-phosphate acyltransferase (Chlorobium luteolum (strain DSM 273 / BCRC 81028 / 2530) (Pelodictyon luteolum)).